Reading from the N-terminus, the 74-residue chain is MIFIYLLVQTAESSWLSKTYKKLENSAKKRISEGIAIAIQGGPRRRRFVVQQDTISPRLEVDERFLPNSVQEQI.

The N-terminal stretch at 1–13 is a signal peptide; sequence MIFIYLLVQTAES. Residues 45–74 constitute a propeptide, removed in mature form; that stretch reads RRRFVVQQDTISPRLEVDERFLPNSVQEQI.

Belongs to the cecropin family. As to expression, expressed in the body wall, intestine, uterus and ovary.

Its subcellular location is the secreted. Functionally, has antibacterial activity against several Gram-positive and Gram-negative bacteria. Is weakly active against yeasts. Acts by a nonpore mechanism. This Ascaris suum (Pig roundworm) protein is Cecropin-P2 (ASCEC-2).